The chain runs to 313 residues: PDCD10 and GCKIII kinases-associated protein 1 (313 aa).

Residues lysine 42–isoleucine 95 form a disordered region. Over residues serine 58–serine 69 the composition is skewed to low complexity. Position 60 is a phosphoserine (serine 60). Residues threonine 70 to glutamine 81 show a composition bias toward polar residues. Threonine 104 carries the phosphothreonine modification. A phosphoserine mark is found at serine 107, serine 237, and serine 240. A disordered region spans residues tyrosine 253–aspartate 288.

In terms of assembly, interacts with KEAP1; this interaction prevents the ubiquitination of KEAP1 by TRIM25, thus protecting KEAP1 from degradation. Found in association with PDCD10 and members of the STE20 kinases, such as STK24, STK25, and STK26.

Its subcellular location is the cell membrane. Its function is as follows. Acts as a tumor suppressor. Acts as a tumor suppressor for colorectal cancer cell proliferation by targeting KEAP1/USP17/ELK1/CDK6 axis. The polypeptide is PDCD10 and GCKIII kinases-associated protein 1 (Rattus norvegicus (Rat)).